Here is a 166-residue protein sequence, read N- to C-terminus: Large ribosomal subunit protein uL10 (166 aa).

It belongs to the universal ribosomal protein uL10 family. As to quaternary structure, part of the ribosomal stalk of the 50S ribosomal subunit. The N-terminus interacts with L11 and the large rRNA to form the base of the stalk. The C-terminus forms an elongated spine to which L12 dimers bind in a sequential fashion forming a multimeric L10(L12)X complex.

Its function is as follows. Forms part of the ribosomal stalk, playing a central role in the interaction of the ribosome with GTP-bound translation factors. In Bacillus mycoides (strain KBAB4) (Bacillus weihenstephanensis), this protein is Large ribosomal subunit protein uL10.